We begin with the raw amino-acid sequence, 240 residues long: (DL)-glycerol-3-phosphatase 2 (240 aa).

Aspartate 20 serves as the catalytic Nucleophile. Mg(2+) is bound by residues aspartate 20, aspartate 22, and aspartate 185. Aspartate 22 (proton donor) is an active-site residue.

The protein belongs to the HAD-like hydrolase superfamily. DOG/GPP family. Requires Mg(2+) as cofactor. In terms of tissue distribution, ubiquitous with highest expression in siliques. Mainly restricted to the meristem of immature flower and vascular elements of the root, shoot, leave, siliqua and developing embryo (at the protein level).

It is found in the cytoplasm. The enzyme catalyses sn-glycerol 1-phosphate + H2O = glycerol + phosphate. It catalyses the reaction sn-glycerol 3-phosphate + H2O = glycerol + phosphate. Its function is as follows. Acts as a glycerol-3-phosphatase with higher stereospecificity for L-glycerol-3-phosphate than DL-glycerol-3-phosphate. This Arabidopsis thaliana (Mouse-ear cress) protein is (DL)-glycerol-3-phosphatase 2 (GPP2).